We begin with the raw amino-acid sequence, 344 residues long: tRNA N6-adenosine threonylcarbamoyltransferase (344 aa).

Fe cation-binding residues include His-110 and His-114. Substrate-binding positions include 132 to 136 (LVSGG), Asp-166, Gly-179, Asp-183, and Asn-278. Asp-306 contacts Fe cation.

The protein belongs to the KAE1 / TsaD family. Requires Fe(2+) as cofactor.

Its subcellular location is the cytoplasm. The catalysed reaction is L-threonylcarbamoyladenylate + adenosine(37) in tRNA = N(6)-L-threonylcarbamoyladenosine(37) in tRNA + AMP + H(+). Required for the formation of a threonylcarbamoyl group on adenosine at position 37 (t(6)A37) in tRNAs that read codons beginning with adenine. Is involved in the transfer of the threonylcarbamoyl moiety of threonylcarbamoyl-AMP (TC-AMP) to the N6 group of A37, together with TsaE and TsaB. TsaD likely plays a direct catalytic role in this reaction. The protein is tRNA N6-adenosine threonylcarbamoyltransferase of Nocardia farcinica (strain IFM 10152).